A 208-amino-acid chain; its full sequence is N-(5'-phosphoribosyl)anthranilate isomerase (208 aa).

It belongs to the TrpF family.

It carries out the reaction N-(5-phospho-beta-D-ribosyl)anthranilate = 1-(2-carboxyphenylamino)-1-deoxy-D-ribulose 5-phosphate. It participates in amino-acid biosynthesis; L-tryptophan biosynthesis; L-tryptophan from chorismate: step 3/5. The sequence is that of N-(5'-phosphoribosyl)anthranilate isomerase from Methanococcus maripaludis (strain C5 / ATCC BAA-1333).